Reading from the N-terminus, the 93-residue chain is U8-theraphotoxin-Hs1b (93 aa).

Positions 1–18 are cleaved as a signal peptide; it reads MKAILLLAIFSVLTVAIC. 4 disulfide bridges follow: Cys-40-Cys-54, Cys-40-Cys-81, Cys-53-Cys-66, and Cys-84-Cys-91.

It belongs to the neurotoxin 27 (Jztx-72) family. ICK-72 subfamily. As to expression, expressed by the venom gland.

The protein localises to the secreted. In terms of biological role, probable neurotoxin with ion channel impairing activity. This chain is U8-theraphotoxin-Hs1b, found in Cyriopagopus schmidti (Chinese bird spider).